Reading from the N-terminus, the 133-residue chain is Small ribosomal subunit protein uS11 (133 aa).

The protein belongs to the universal ribosomal protein uS11 family. As to quaternary structure, part of the 30S ribosomal subunit. Interacts with proteins S7 and S18. Binds to IF-3.

Its function is as follows. Located on the platform of the 30S subunit, it bridges several disparate RNA helices of the 16S rRNA. Forms part of the Shine-Dalgarno cleft in the 70S ribosome. The sequence is that of Small ribosomal subunit protein uS11 from Christiangramia forsetii (strain DSM 17595 / CGMCC 1.15422 / KT0803) (Gramella forsetii).